Here is a 221-residue protein sequence, read N- to C-terminus: Eukaryotic translation initiation factor 3 subunit K (221 aa).

A PCI domain is found at 46 to 207; sequence YDLEANLACL…NIKTKHITEK (162 aa).

The protein belongs to the eIF-3 subunit K family. Component of the eukaryotic translation initiation factor 3 (eIF-3) complex.

The protein localises to the cytoplasm. Its function is as follows. Component of the eukaryotic translation initiation factor 3 (eIF-3) complex, which is involved in protein synthesis of a specialized repertoire of mRNAs and, together with other initiation factors, stimulates binding of mRNA and methionyl-tRNAi to the 40S ribosome. The eIF-3 complex specifically targets and initiates translation of a subset of mRNAs involved in cell proliferation. The chain is Eukaryotic translation initiation factor 3 subunit K from Culex quinquefasciatus (Southern house mosquito).